We begin with the raw amino-acid sequence, 523 residues long: Sodium-dependent lysophosphatidylcholine symporter 1-B (523 aa).

At 1–34 (MAKGEGAEQYTNTSLLQKPSPDEVKLAKHETKSR) the chain is on the cytoplasmic side. Residues 35–64 (LSVCSKLCYAIGGAPYQITGCAIGFFLQIY) traverse the membrane as a helical segment. Topologically, residues 65 to 75 (LLDVALLDPFY) are extracellular. A helical transmembrane segment spans residues 76 to 96 (ASIILFVGRAWDAVTDPTVGF). Residues 97-108 (LVSRTPWTRFGR) are Cytoplasmic-facing. Residues 109 to 128 (MMPWIVLSTPFAVLCYFLIW) form a helical membrane-spanning segment. Over 129–138 (YVPSVDQGKV) the chain is Extracellular. A helical transmembrane segment spans residues 139 to 163 (VWYLIFYCCFQTLQTCFHVPYSALT). The Cytoplasmic segment spans residues 164 to 170 (MFISTEQ). A helical transmembrane segment spans residues 171-202 (KERDSATAYRMTVEVLGTLIGTAIQGQIVGMA). Over 203–226 (NAPCISTEIDLNSTGLEVAPDVNI) the chain is Extracellular. A disulfide bridge connects residues cysteine 206 and cysteine 457. Residues asparagine 214 and asparagine 225 are each glycosylated (N-linked (GlcNAc...) asparagine). Residues 227 to 260 (TDPHVSLQDLRNAYMIASGVICAIYVVCAVVLFL) form a helical membrane-spanning segment. At 261–290 (GVKEQKDTCRVRTEPMSFFQGICMVMGHGP) the chain is on the cytoplasmic side. Residues 291 to 317 (YAKLVMGFLFTSLAFMLLEGNFALFCI) traverse the membrane as a helical segment. Topologically, residues 318–328 (YNLGFRNDFQN) are extracellular. The chain crosses the membrane as a helical span at residues 329–347 (VLLVIMLSATLAIPFWQWF). Topologically, residues 348 to 351 (LTKF) are cytoplasmic. The chain crosses the membrane as a helical span at residues 352-373 (GKKTAVYIGTTSVVPFLISVVL). Topologically, residues 374 to 376 (VPS) are extracellular. A helical transmembrane segment spans residues 377-413 (SLAVTYIASFAAGVSVAAAFLLPWSMLPDVVDDFKVQ). The Cytoplasmic portion of the chain corresponds to 414–423 (NPESQGHEAI). A helical membrane pass occupies residues 424–450 (FYSFYVFFTKFASGVSLGVSTLSLDFA). Residues 451-462 (GYVTRGCTQPGE) are Extracellular-facing. A helical transmembrane segment spans residues 463–486 (VKLTLKILVSAAPIVLIIIGLLIF). Residues 487 to 523 (ISYPINEEKRQGNRKLLNEQRENEMDSETDSTELNVV) lie on the Cytoplasmic side of the membrane. The interval 504 to 523 (NEQRENEMDSETDSTELNVV) is disordered.

This sequence belongs to the major facilitator superfamily. As to expression, expressed in the developing nervous system.

The protein resides in the cell membrane. Its subcellular location is the endoplasmic reticulum membrane. The catalysed reaction is a 1-acyl-sn-glycero-3-phosphocholine(in) + Na(+)(in) = a 1-acyl-sn-glycero-3-phosphocholine(out) + Na(+)(out). The enzyme catalyses 1-(4Z,7Z,10Z,13Z,16Z,19Z-docosahexaenoyl)-sn-glycero-3-phosphocholine(in) + Na(+)(in) = 1-(4Z,7Z,10Z,13Z,16Z,19Z-docosahexaenoyl)-sn-glycero-3-phosphocholine(out) + Na(+)(out). It carries out the reaction 1-(9Z-octadecenoyl)-sn-glycero-3-phosphocholine(in) + Na(+)(in) = 1-(9Z-octadecenoyl)-sn-glycero-3-phosphocholine(out) + Na(+)(out). It catalyses the reaction 1-hexadecanoyl-sn-glycero-3-phosphocholine(in) + Na(+)(in) = 1-hexadecanoyl-sn-glycero-3-phosphocholine(out) + Na(+)(out). The catalysed reaction is a 1-acyl-sn-glycero-3-phosphoethanolamine(in) + Na(+)(in) = a 1-acyl-sn-glycero-3-phosphoethanolamine(out) + Na(+)(out). Its function is as follows. Sodium-dependent lysophosphatidylcholine (LPC) symporter, which plays an essential role for blood-brain barrier formation and function. Specifically expressed in endothelium of the blood-brain barrier of micro-vessels and transports LPC into the brain. Transport of LPC is essential because it constitutes the major mechanism by which docosahexaenoic acid (DHA), an omega-3 fatty acid that is essential for normal brain growth and cognitive function, enters the brain. Transports LPC carrying long-chain fatty acids such LPC oleate and LPC palmitate with a minimum acyl chain length of 14 carbons. Does not transport docosahexaenoic acid in unesterified fatty acid. In Danio rerio (Zebrafish), this protein is Sodium-dependent lysophosphatidylcholine symporter 1-B (mfsd2ab).